Reading from the N-terminus, the 838-residue chain is Collagen alpha-2(I) chain (838 aa).

The tract at residues 1 to 838 is disordered; the sequence is GPMGIMGPRG…GTVGPAGIRS (838 aa). Residues 11-38 show a composition bias toward low complexity; that stretch reads FQGPAGEPGEPGQTGPAGARGPAGPPGK. Positions 39–53 are enriched in basic and acidic residues; it reads AGEDGHPGKPGRPGE. 4 stretches are compositionally biased toward low complexity: residues 101-122, 137-147, 215-236, and 329-344; these read SRGS…SAGP, PVGNTGPAGPA, NGES…RGIP, and AGNR…NGAQ. The span at 351-360 shows a compositional bias: gly residues; it reads GVQGGKGEQG. 2 stretches are compositionally biased toward low complexity: residues 407–424 and 436–446; these read PGES…SRGP and EPGVVGAPGTA. The span at 447–456 shows a compositional bias: gly residues; sequence GPAGSGGIPG. Low complexity-rich tracts occupy residues 479-523, 530-550, and 568-581; these read VGTT…PRGT, VGPA…QPGA, and SAGP…PGPA. The segment covering 582–591 has biased composition (gly residues); that stretch reads GSRGDGGPPG. The segment covering 593-602 has biased composition (low complexity); sequence TGFPGAAGRT. Residues 633–642 show a composition bias toward gly residues; it reads GETGAGGPPG. A compositionally biased stretch (low complexity) spans 649 to 689; it reads TAGPQGIIGAPGIIGIPGSRGIPGVSGSVGEPGPIGISGPP. Residues 693–702 are compositionally biased toward gly residues; sequence GPSGGVGNPG. Low complexity-rich tracts occupy residues 703–718, 736–758, and 766–781; these read VNGA…NPGN, YAGN…VGPA, and EPGP…AIGP.

Belongs to the fibrillar collagen family. As to quaternary structure, trimers of one alpha 2(I) and two alpha 1(I) chains. Interacts (via C-terminus) with TMEM131 (via PapD-L domain); the interaction is direct and is involved in assembly and TRAPPIII ER-to-Golgi transport complex-dependent secretion of collagen. Post-translationally, prolines at the third position of the tripeptide repeating unit (G-X-Y) are hydroxylated in some or all of the chains. In terms of tissue distribution, forms the fibrils of tendon, ligaments and bones. In bones, the fibrils are mineralized with calcium hydroxyapatite.

The protein localises to the secreted. Its subcellular location is the extracellular space. The protein resides in the extracellular matrix. Functionally, type I collagen is a member of group I collagen (fibrillar forming collagen). In Cyclopes didactylus (Silky anteater), this protein is Collagen alpha-2(I) chain.